The primary structure comprises 421 residues: ATP-dependent RNA helicase RhlB (421 aa).

Positions 9 to 37 (QKFSDFALHPQVVEALEKKGFYNCTPIQA) match the Q motif motif. Positions 40 to 219 (LPLTLAGRDV…FEQMNNAEYV (180 aa)) constitute a Helicase ATP-binding domain. 53–60 (AQTGTGKT) contributes to the ATP binding site. The short motif at 165–168 (DEAD) is the DEAD box element. In terms of domain architecture, Helicase C-terminal spans 245–390 (RLLQTLIEEE…VSKYNPEALM (146 aa)). A disordered region spans residues 396–421 (PLRLTRSRPGNGPRRAGAPRNRRRSG). Residues 402 to 414 (SRPGNGPRRAGAP) show a composition bias toward low complexity.

This sequence belongs to the DEAD box helicase family. RhlB subfamily. As to quaternary structure, component of the RNA degradosome, which is a multiprotein complex involved in RNA processing and mRNA degradation.

It is found in the cytoplasm. The catalysed reaction is ATP + H2O = ADP + phosphate + H(+). DEAD-box RNA helicase involved in RNA degradation. Has RNA-dependent ATPase activity and unwinds double-stranded RNA. In Salmonella arizonae (strain ATCC BAA-731 / CDC346-86 / RSK2980), this protein is ATP-dependent RNA helicase RhlB.